A 143-amino-acid polypeptide reads, in one-letter code: 3-dehydroquinate dehydratase (143 aa).

Tyr-22 acts as the Proton acceptor in catalysis. Substrate is bound by residues Asn-73, His-79, and Asp-86. Residue His-99 is the Proton donor of the active site. Substrate contacts are provided by residues 100-101 (IS) and Arg-110.

It belongs to the type-II 3-dehydroquinase family. As to quaternary structure, homododecamer.

The enzyme catalyses 3-dehydroquinate = 3-dehydroshikimate + H2O. It functions in the pathway metabolic intermediate biosynthesis; chorismate biosynthesis; chorismate from D-erythrose 4-phosphate and phosphoenolpyruvate: step 3/7. In terms of biological role, catalyzes a trans-dehydration via an enolate intermediate. The chain is 3-dehydroquinate dehydratase from Mycobacterium avium (strain 104).